The following is a 562-amino-acid chain: Pyruvate kinase isozyme G, chloroplastic (562 aa).

Arg-121 provides a ligand contact to substrate. 4 residues coordinate K(+): Asn-123, Ser-125, Asp-156, and Thr-157. 123–126 (NMSH) serves as a coordination point for ATP. Residue Glu-308 participates in Mg(2+) binding. The substrate site is built by Gly-331, Asp-332, and Thr-364. Asp-332 is a binding site for Mg(2+).

Belongs to the pyruvate kinase family. As to quaternary structure, homotetramer. Mg(2+) serves as cofactor. Requires K(+) as cofactor. Highest levels in leaves. Also found in stems, roots and flowers.

It localises to the plastid. Its subcellular location is the chloroplast. It catalyses the reaction pyruvate + ATP = phosphoenolpyruvate + ADP + H(+). Its pathway is carbohydrate degradation; glycolysis; pyruvate from D-glyceraldehyde 3-phosphate: step 5/5. In Nicotiana tabacum (Common tobacco), this protein is Pyruvate kinase isozyme G, chloroplastic.